The sequence spans 572 residues: Putative inorganic phosphate transporter C8E4.01c (572 aa).

Over 1–47 the chain is Cytoplasmic; it reads MAFGSKILNIGSKSDEYNDDAVPLDQVEEGAQERRYYLGLTKREFKL. 2 positions are modified to phosphoserine: Ser12 and Ser14. Residues 48 to 68 traverse the membrane as a helical segment; it reads MMLAGVGFFLDSYDLFIINLV. The Extracellular segment spans residues 69–99; the sequence is TPIFEYLYWGGIEKGPTGKGHYPSGIRGLVN. A helical transmembrane segment spans residues 100–120; it reads ASANIGNIFGQLLFGFMGDFF. Topologically, residues 121–123 are cytoplasmic; that stretch reads GRK. The chain crosses the membrane as a helical span at residues 124-144; that stretch reads FVYGKEMVIVIIATVLVIAMP. The Extracellular portion of the chain corresponds to 145–153; the sequence is KSIHSPLSK. The chain crosses the membrane as a helical span at residues 154–174; sequence MMWVFCWRWLLGVGIGGDYPM. Over 175 to 193 the chain is Cytoplasmic; sequence SAAITSERSKIKRRGTLIS. Residues 194–214 traverse the membrane as a helical segment; sequence LIFAFQGFGTLAGAIVTIILL. The Extracellular segment spans residues 215-229; that stretch reads GCFEHPLNREGHYHK. Residues 230 to 250 form a helical membrane-spanning segment; the sequence is LEGVWRLQFGLALVPAIGVLI. Topologically, residues 251-346 are cytoplasmic; sequence PRLIMKESKS…TYFRQWRHFK (96 aa). A disordered region spans residues 265–297; it reads KALNSAEGKDPKAFFNTDDEDNMKKSSSHGDSE. Residues 286–296 show a composition bias toward basic and acidic residues; it reads NMKKSSSHGDS. Phosphoserine occurs at positions 292 and 296. Residues 347–367 form a helical membrane-spanning segment; it reads HLLGTSVCWFLLDIAFYGVNL. Residues 368-395 lie on the Extracellular side of the membrane; sequence NQSVILKNIGFSTGTNEYRTLMKNAIGN. The helical transmembrane segment at 396-416 threads the bilayer; it reads LIIAVAGYVPGYWFNVFLVEI. Over 417–420 the chain is Cytoplasmic; sequence LGRK. Residues 421-441 traverse the membrane as a helical segment; it reads WIQLQGFVITGLMFAILAGRW. The Extracellular segment spans residues 442 to 449; that stretch reads NEISTGGR. Residues 450-470 form a helical membrane-spanning segment; the sequence is FACFVIAQLFSNFGPNSTTFI. Residues 471–485 are Cytoplasmic-facing; it reads YPAEVFPARVRGTAH. The helical transmembrane segment at 486-506 threads the bilayer; sequence GVSAALGKCGAILASLLFNFL. The Extracellular portion of the chain corresponds to 507 to 508; that stretch reads TG. The helical transmembrane segment at 509–529 threads the bilayer; the sequence is VIGYGNVMWIFCGCMWGGILF. Topologically, residues 530 to 572 are cytoplasmic; sequence TLLLPETKGRDADEIDRLELFYGKDGKVQCDSKWKSWYFNGIF.

The protein belongs to the major facilitator superfamily. Sugar transporter (TC 2.A.1.1) family.

It localises to the membrane. Its function is as follows. High-affinity transporter for external inorganic phosphate. This chain is Putative inorganic phosphate transporter C8E4.01c, found in Schizosaccharomyces pombe (strain 972 / ATCC 24843) (Fission yeast).